The following is a 574-amino-acid chain: Proline--tRNA ligase (574 aa).

This sequence belongs to the class-II aminoacyl-tRNA synthetase family. ProS type 1 subfamily. In terms of assembly, homodimer.

It is found in the cytoplasm. It catalyses the reaction tRNA(Pro) + L-proline + ATP = L-prolyl-tRNA(Pro) + AMP + diphosphate. Catalyzes the attachment of proline to tRNA(Pro) in a two-step reaction: proline is first activated by ATP to form Pro-AMP and then transferred to the acceptor end of tRNA(Pro). As ProRS can inadvertently accommodate and process non-cognate amino acids such as alanine and cysteine, to avoid such errors it has two additional distinct editing activities against alanine. One activity is designated as 'pretransfer' editing and involves the tRNA(Pro)-independent hydrolysis of activated Ala-AMP. The other activity is designated 'posttransfer' editing and involves deacylation of mischarged Ala-tRNA(Pro). The misacylated Cys-tRNA(Pro) is not edited by ProRS. The protein is Proline--tRNA ligase of Aeromonas hydrophila subsp. hydrophila (strain ATCC 7966 / DSM 30187 / BCRC 13018 / CCUG 14551 / JCM 1027 / KCTC 2358 / NCIMB 9240 / NCTC 8049).